A 403-amino-acid polypeptide reads, in one-letter code: S-adenosylmethionine synthase (403 aa).

Residue His17 participates in ATP binding. Asp19 is a Mg(2+) binding site. Glu45 contributes to the K(+) binding site. 2 residues coordinate L-methionine: Glu58 and Gln104. The tract at residues 104-114 is flexible loop; that stretch reads QSPDIAQGVDT. ATP-binding positions include 179–181, 250–251, Asp259, 265–266, Ala282, and Lys286; these read DGK, KF, and RK. Asp259 contributes to the L-methionine binding site. Lys290 provides a ligand contact to L-methionine.

The protein belongs to the AdoMet synthase family. In terms of assembly, homotetramer; dimer of dimers. It depends on Mg(2+) as a cofactor. K(+) is required as a cofactor.

The protein resides in the cytoplasm. The enzyme catalyses L-methionine + ATP + H2O = S-adenosyl-L-methionine + phosphate + diphosphate. The protein operates within amino-acid biosynthesis; S-adenosyl-L-methionine biosynthesis; S-adenosyl-L-methionine from L-methionine: step 1/1. Functionally, catalyzes the formation of S-adenosylmethionine (AdoMet) from methionine and ATP. The overall synthetic reaction is composed of two sequential steps, AdoMet formation and the subsequent tripolyphosphate hydrolysis which occurs prior to release of AdoMet from the enzyme. In Mycobacterium tuberculosis (strain ATCC 25177 / H37Ra), this protein is S-adenosylmethionine synthase.